A 273-amino-acid polypeptide reads, in one-letter code: Putative phosphoenolpyruvate synthase regulatory protein (273 aa).

Residue 153-160 (AVSRAGKT) coordinates ADP.

It belongs to the pyruvate, phosphate/water dikinase regulatory protein family. PSRP subfamily.

The catalysed reaction is [pyruvate, water dikinase] + ADP = [pyruvate, water dikinase]-phosphate + AMP + H(+). It catalyses the reaction [pyruvate, water dikinase]-phosphate + phosphate + H(+) = [pyruvate, water dikinase] + diphosphate. Functionally, bifunctional serine/threonine kinase and phosphorylase involved in the regulation of the phosphoenolpyruvate synthase (PEPS) by catalyzing its phosphorylation/dephosphorylation. The sequence is that of Putative phosphoenolpyruvate synthase regulatory protein from Stenotrophomonas maltophilia (strain K279a).